The sequence spans 717 residues: Fatty acid oxidation complex subunit alpha (717 aa).

Residues 1–189 form an enoyl-CoA hydratase/isomerase region; sequence MIYQSPTIEV…NVGAIDALVA (189 aa). Aspartate 296 contributes to the substrate binding site. The interval 311 to 717 is 3-hydroxyacyl-CoA dehydrogenase; sequence KKVNSAAVLG…ANNGSYYQQA (407 aa). NAD(+) is bound by residues methionine 324, aspartate 343, 400 to 402, lysine 407, and serine 429; that span reads VVE. The active-site For 3-hydroxyacyl-CoA dehydrogenase activity is the histidine 450. Asparagine 453 is a binding site for NAD(+). Positions 500 and 660 each coordinate substrate.

It in the N-terminal section; belongs to the enoyl-CoA hydratase/isomerase family. This sequence in the C-terminal section; belongs to the 3-hydroxyacyl-CoA dehydrogenase family. Heterotetramer of two alpha chains (FadB) and two beta chains (FadA).

It catalyses the reaction a (3S)-3-hydroxyacyl-CoA + NAD(+) = a 3-oxoacyl-CoA + NADH + H(+). The enzyme catalyses a (3S)-3-hydroxyacyl-CoA = a (2E)-enoyl-CoA + H2O. The catalysed reaction is a 4-saturated-(3S)-3-hydroxyacyl-CoA = a (3E)-enoyl-CoA + H2O. It carries out the reaction (3S)-3-hydroxybutanoyl-CoA = (3R)-3-hydroxybutanoyl-CoA. It catalyses the reaction a (3Z)-enoyl-CoA = a 4-saturated (2E)-enoyl-CoA. The enzyme catalyses a (3E)-enoyl-CoA = a 4-saturated (2E)-enoyl-CoA. It functions in the pathway lipid metabolism; fatty acid beta-oxidation. Its function is as follows. Involved in the aerobic and anaerobic degradation of long-chain fatty acids via beta-oxidation cycle. Catalyzes the formation of 3-oxoacyl-CoA from enoyl-CoA via L-3-hydroxyacyl-CoA. It can also use D-3-hydroxyacyl-CoA and cis-3-enoyl-CoA as substrate. The protein is Fatty acid oxidation complex subunit alpha of Shewanella piezotolerans (strain WP3 / JCM 13877).